The chain runs to 235 residues: Orotidine 5'-phosphate decarboxylase (235 aa).

Residues aspartate 12, lysine 34, 61-70 (DMKLLDIDNT), threonine 116, arginine 177, glutamine 186, and arginine 207 contribute to the substrate site. The active-site Proton donor is the lysine 63.

It belongs to the OMP decarboxylase family. Type 1 subfamily. Homodimer.

It catalyses the reaction orotidine 5'-phosphate + H(+) = UMP + CO2. The protein operates within pyrimidine metabolism; UMP biosynthesis via de novo pathway; UMP from orotate: step 2/2. In terms of biological role, catalyzes the decarboxylation of orotidine 5'-monophosphate (OMP) to uridine 5'-monophosphate (UMP). This Rhizobium etli (strain CIAT 652) protein is Orotidine 5'-phosphate decarboxylase.